Consider the following 466-residue polypeptide: Methylenetetrahydrofolate--tRNA-(uracil-5-)-methyltransferase TrmFO (466 aa).

FAD is bound at residue 14–19 (GGGLAG).

Belongs to the MnmG family. TrmFO subfamily. It depends on FAD as a cofactor.

Its subcellular location is the cytoplasm. The catalysed reaction is uridine(54) in tRNA + (6R)-5,10-methylene-5,6,7,8-tetrahydrofolate + NADH + H(+) = 5-methyluridine(54) in tRNA + (6S)-5,6,7,8-tetrahydrofolate + NAD(+). The enzyme catalyses uridine(54) in tRNA + (6R)-5,10-methylene-5,6,7,8-tetrahydrofolate + NADPH + H(+) = 5-methyluridine(54) in tRNA + (6S)-5,6,7,8-tetrahydrofolate + NADP(+). Catalyzes the folate-dependent formation of 5-methyl-uridine at position 54 (M-5-U54) in all tRNAs. The protein is Methylenetetrahydrofolate--tRNA-(uracil-5-)-methyltransferase TrmFO of Brucella canis (strain ATCC 23365 / NCTC 10854 / RM-666).